The primary structure comprises 1092 residues: MPPKKSNARNASLLKEAVTNAGRSDTASTAREGSIAATFVSDSDSSTTASGPVDEKVAAVAELITTLTTNAASDKRQSAADDIAKFVEAEGVAQMVKTKILHGIATGLHNTKQPVAREGAITAIETLIKSPVSKQIEPYMITFIPVLLERLSDKAKTVCLAADSALKALITRLTPYATKQVLPLLLAGIEYSQKWQTKVGALELMQSLSKTAPRQMTTAVPDLVPPLSEVMHDTKAEAKNAGRQTMEAICELINNKDIEKFIPALIDTIANPEKVPDTVHLLGATTFVSEVLPPTLAIMVPLLSRGLNERQTAIKRKAAVIIINMCKLVEKPQIIAPFLPRLLPTLEKIQDDVADPECRQVCQNATKILTKVGIPAPGTVMDDSYEFKKLDDKALAYLKKAIGHQQITEIPEAYRPVLEYLEHIAAAMVADGNMDNDDWNGSIIPTLKAFIPTEGTVTNAVKEFRELSFGSNVKEAVAEEEEDDAEELCNCEFSLAYGARVLLNRTHLILKRGHRYGLTGANGSGKSTLMRAIANGQVEGFPPADQLKTVAVEHDLDGAHEHDNKEVQAFVLEDPVYAHLPKETVVNMLESVGFKGPMATRPVGQLSGGWRMKLALARAMLHNADILLLDEPTNHLDVINVAWLQDYLIGLKTVTSIIVSHDSSFLDIVCSDIIHLDNFKLKRYRGNLSKFVEAVPEAKAYYELGAAQQTFRFPEPGMLEGVKTKERAILKVQNAVFQYPGTDRRQLNGVTFQCSLGSRVAVVGPNGAGKSTLIKLLCGVIEPDNGVVWRHPNLRIAYVAQHAFEHIEKHTNLTPNQYIQWRYQTGEDREEMEKAARQISAEEEAAMKKVQVISGEKKVVDSVIGRRKLKNSYEYEVSWVGKLSNENSWLPRDTLIEMGFLKKVQEIDQAEAARQGLARPLTQKEIEKHLSDVGIDSEIGTHSHIRGLSGGQKVKVVIAGAMWQRPHLLVLDEPTNFLDRDSLGALKTAIDAYGGGVIMVTHSREFSEAICKEVWKVDNGELTPTGHNWVSGQGSGPRLEDKNKDEEVFDAFGNKIDVAKQKSKLSGKDLRKKRKEREARRKRGEEVSDDDE.

V92 contacts ADP. 7 HEAT repeats span residues 95–133 (MVKTKILHGIATGLHNTKQPVAREGAITAIETLIKSPVS), 138–175 (PYMITFIPVLLERLSDKAKTVCLAADSALKALITRLTP), 177–214 (ATKQVLPLLLAGIEYSQKWQTKVGALELMQSLSKTAPR), 218–255 (TAVPDLVPPLSEVMHDTKAEAKNAGRQTMEAICELINN), 257–293 (DIEKFIPALIDTIANPEKVPDTVHLLGATTFVSEVLP), 294–331 (PTLAIMVPLLSRGLNERQTAIKRKAAVIIINMCKLVEK), and 333–370 (QIIAPFLPRLLPTLEKIQDDVADPECRQVCQNATKILT). ADP is bound at residue E454. ABC transporter domains are found at residues 486–704 (EELC…YYEL) and 730–1044 (LKVQ…DKNK). Residues N766, E973, N976, and H1002 each contribute to the ADP site. Disordered stretches follow at residues 1023 to 1044 (TPTGHNWVSGQGSGPRLEDKNK) and 1063 to 1092 (SKLSGKDLRKKRKEREARRKRGEEVSDDDE). Positions 1063-1075 (SKLSGKDLRKKRK) are enriched in basic residues. Positions 1076-1086 (EREARRKRGEE) are enriched in basic and acidic residues.

The protein belongs to the ABC transporter superfamily. ABCF family. EF3 subfamily.

Its subcellular location is the cytoplasm. The protein localises to the cytosol. It carries out the reaction ATP + H2O = ADP + phosphate + H(+). It participates in protein biosynthesis; polypeptide chain elongation. Its function is as follows. Ribosome-dependent ATPase that functions in cytoplasmic translation elongation. Required for the ATP-dependent release of deacylated tRNA from the ribosomal E-site during protein biosynthesis. Stimulates the eEF1A-dependent binding of aminoacyl-tRNA to the ribosomal A-site, which has reduced affinity for tRNA as long as the E-site is occupied. Assists translation termination by stimulating the release of nascent protein from the ribosome by release factors. The protein is Elongation factor 3 of Gonapodya prolifera (strain JEL478) (Monoblepharis prolifera).